A 485-amino-acid polypeptide reads, in one-letter code: Phosphoglucosamine mutase (485 aa).

Ser133 (phosphoserine intermediate) is an active-site residue. 4 residues coordinate Mg(2+): Ser133, Asp274, Asp276, and Asp278. Ser133 is subject to Phosphoserine.

This sequence belongs to the phosphohexose mutase family. Mg(2+) is required as a cofactor. In terms of processing, activated by phosphorylation.

It catalyses the reaction alpha-D-glucosamine 1-phosphate = D-glucosamine 6-phosphate. In terms of biological role, catalyzes the conversion of glucosamine-6-phosphate to glucosamine-1-phosphate. The chain is Phosphoglucosamine mutase from Crocosphaera subtropica (strain ATCC 51142 / BH68) (Cyanothece sp. (strain ATCC 51142)).